The primary structure comprises 527 residues: Pyruvate kinase 1, cytosolic (527 aa).

Residue R58 coordinates substrate. 4 residues coordinate K(+): D60, S62, D92, and T93. 60 to 63 is a binding site for ATP; it reads DFSW. K256 serves as a coordination point for substrate. E258 provides a ligand contact to Mg(2+). G281, N282, and T313 together coordinate substrate. N282 is a Mg(2+) binding site.

It belongs to the pyruvate kinase family. As to quaternary structure, homotetramer. It depends on Mg(2+) as a cofactor. The cofactor is K(+).

The protein resides in the cytoplasm. It is found in the cytosol. It carries out the reaction pyruvate + ATP = phosphoenolpyruvate + ADP + H(+). It participates in carbohydrate degradation; glycolysis; pyruvate from D-glyceraldehyde 3-phosphate: step 5/5. Its function is as follows. Key regulatory enzyme of the glycolytic pathway that catalyzes the final step of glycolysis, converting ADP and phosphoenolpyruvate (PEP) to ATP and pyruvate by essentially irreversible transphosphorylation. Is critical for plant growth and development. The chain is Pyruvate kinase 1, cytosolic from Oryza sativa subsp. indica (Rice).